The primary structure comprises 195 residues: NADH-quinone oxidoreductase subunit I (195 aa).

4Fe-4S ferredoxin-type domains are found at residues leucine 44–alanine 74 and glutamine 90–glutamate 119. The [4Fe-4S] cluster site is built by cysteine 54, cysteine 57, cysteine 60, cysteine 64, cysteine 99, cysteine 102, cysteine 105, and cysteine 109. The segment at methionine 145–lysine 195 is disordered. Low complexity predominate over residues alanine 168 to glutamate 181. Residues alanine 184–lysine 195 show a composition bias toward basic and acidic residues.

It belongs to the complex I 23 kDa subunit family. NDH-1 is composed of 14 different subunits. Subunits NuoA, H, J, K, L, M, N constitute the membrane sector of the complex. Requires [4Fe-4S] cluster as cofactor.

It localises to the cell membrane. It carries out the reaction a quinone + NADH + 5 H(+)(in) = a quinol + NAD(+) + 4 H(+)(out). Its function is as follows. NDH-1 shuttles electrons from NADH, via FMN and iron-sulfur (Fe-S) centers, to quinones in the respiratory chain. The immediate electron acceptor for the enzyme in this species is believed to be ubiquinone. Couples the redox reaction to proton translocation (for every two electrons transferred, four hydrogen ions are translocated across the cytoplasmic membrane), and thus conserves the redox energy in a proton gradient. The sequence is that of NADH-quinone oxidoreductase subunit I from Rhodococcus erythropolis (strain PR4 / NBRC 100887).